A 262-amino-acid polypeptide reads, in one-letter code: Trypsin theta (262 aa).

An N-terminal signal peptide occupies residues 1–19; it reads MHGLVVLLVCLAVGSAFAG. The propeptide at 20–34 is activation peptide; sequence TIGVSNADPFEREGR. Positions 35 to 260 constitute a Peptidase S1 domain; the sequence is IVGGEDTTIR…LRKWILNASQ (226 aa). A disulfide bond links Cys-61 and Cys-77. Residues His-76 and Asp-121 each act as charge relay system in the active site. Cystine bridges form between Cys-186–Cys-203 and Cys-212–Cys-236. Catalysis depends on Ser-216, which acts as the Charge relay system.

This sequence belongs to the peptidase S1 family.

Its subcellular location is the secreted. It localises to the extracellular space. The enzyme catalyses Preferential cleavage: Arg-|-Xaa, Lys-|-Xaa.. This is Trypsin theta (thetaTry) from Drosophila erecta (Fruit fly).